We begin with the raw amino-acid sequence, 316 residues long: MDKENFTRLRGELFCDHPLARYTSWRVGGKAERFYRPADLFDLQDFLTQLPSDEPLTWLGLGSNVLIRDGGIKGTVILTLNRLKELSVVNSQLVFREKSGTEDFFSGNGKTIIRAEAGVTCAKLAKFCVSQGLEDGAFFAGIPGTVGGALAMNAGAFGGETWRTVIGVETMNHQGEILKRTPDEFKIHYRQVEGLENQFFIAGYFCFNHGDPDKAKTAINALLKKRNLSQPIGKYSCGSVFRNPPGDYAARLIESAGLKGKSIGNAEVSEKHANFILNKGNASAADIEALIHYVAQHVSQIHGIQLVKEVNIIGRS.

One can recognise an FAD-binding PCMH-type domain in the interval Val27–Lys225. Arg190 is a catalytic residue. Ser239 serves as the catalytic Proton donor. Glu309 is an active-site residue.

It belongs to the MurB family. FAD is required as a cofactor.

It localises to the cytoplasm. The catalysed reaction is UDP-N-acetyl-alpha-D-muramate + NADP(+) = UDP-N-acetyl-3-O-(1-carboxyvinyl)-alpha-D-glucosamine + NADPH + H(+). The protein operates within cell wall biogenesis; peptidoglycan biosynthesis. Functionally, cell wall formation. The polypeptide is UDP-N-acetylenolpyruvoylglucosamine reductase (Coxiella burnetii (strain CbuG_Q212) (Coxiella burnetii (strain Q212))).